The chain runs to 77 residues: uncharacterized protein (77 aa).

The chain crosses the membrane as a helical span at residues 57–76 (NSAVICTLIANLMAFFMLLT).

The protein resides in the membrane. This is an uncharacterized protein from Schizosaccharomyces pombe (strain 972 / ATCC 24843) (Fission yeast).